Here is a 225-residue protein sequence, read N- to C-terminus: Cytochrome c oxidase subunit 2 (225 aa).

Residues 1 to 25 (MSTWMMFMFQESNSFYADNLVSFHN) lie on the Mitochondrial intermembrane side of the membrane. Residues 26 to 47 (LVMMIIIMISTLTIYIIFDLFM) traverse the membrane as a helical segment. The Mitochondrial matrix portion of the chain corresponds to 48-62 (NKFSNLFLLKNHNIE). The helical transmembrane segment at 63-82 (IIWTIVPIVILLIICFPSLK) threads the bilayer. Topologically, residues 83-225 (ILYLIDEIIN…FFLNWINKQN (143 aa)) are mitochondrial intermembrane. Cu cation contacts are provided by His-159, Cys-194, Glu-196, Cys-198, His-202, and Met-205. A Mg(2+)-binding site is contributed by Glu-196.

This sequence belongs to the cytochrome c oxidase subunit 2 family. Component of the cytochrome c oxidase (complex IV, CIV), a multisubunit enzyme composed of a catalytic core of 3 subunits and several supernumerary subunits. The complex exists as a monomer or a dimer and forms supercomplexes (SCs) in the inner mitochondrial membrane with ubiquinol-cytochrome c oxidoreductase (cytochrome b-c1 complex, complex III, CIII). Cu cation is required as a cofactor.

It localises to the mitochondrion inner membrane. It catalyses the reaction 4 Fe(II)-[cytochrome c] + O2 + 8 H(+)(in) = 4 Fe(III)-[cytochrome c] + 2 H2O + 4 H(+)(out). Component of the cytochrome c oxidase, the last enzyme in the mitochondrial electron transport chain which drives oxidative phosphorylation. The respiratory chain contains 3 multisubunit complexes succinate dehydrogenase (complex II, CII), ubiquinol-cytochrome c oxidoreductase (cytochrome b-c1 complex, complex III, CIII) and cytochrome c oxidase (complex IV, CIV), that cooperate to transfer electrons derived from NADH and succinate to molecular oxygen, creating an electrochemical gradient over the inner membrane that drives transmembrane transport and the ATP synthase. Cytochrome c oxidase is the component of the respiratory chain that catalyzes the reduction of oxygen to water. Electrons originating from reduced cytochrome c in the intermembrane space (IMS) are transferred via the dinuclear copper A center (CU(A)) of subunit 2 and heme A of subunit 1 to the active site in subunit 1, a binuclear center (BNC) formed by heme A3 and copper B (CU(B)). The BNC reduces molecular oxygen to 2 water molecules using 4 electrons from cytochrome c in the IMS and 4 protons from the mitochondrial matrix. In Apis koschevnikovi (Koschevnikov's honey bee), this protein is Cytochrome c oxidase subunit 2 (COII).